The chain runs to 495 residues: UDP-N-acetylmuramoyl-L-alanyl-D-glutamate--2,6-diaminopimelate ligase (495 aa).

Residues Leu-32 and Ser-34 each coordinate UDP-N-acetyl-alpha-D-muramoyl-L-alanyl-D-glutamate. 119 to 125 is a binding site for ATP; it reads GTNGKTT. Residues Asn-160, 161–162, Ser-188, Gln-194, and Arg-196 each bind UDP-N-acetyl-alpha-D-muramoyl-L-alanyl-D-glutamate; that span reads TT. Lys-228 is subject to N6-carboxylysine. Residues Arg-390, 414 to 417, Gly-465, and Glu-469 contribute to the meso-2,6-diaminopimelate site; that span reads DNPR. The Meso-diaminopimelate recognition motif motif lies at 414 to 417; the sequence is DNPR.

Belongs to the MurCDEF family. MurE subfamily. The cofactor is Mg(2+). In terms of processing, carboxylation is probably crucial for Mg(2+) binding and, consequently, for the gamma-phosphate positioning of ATP.

It localises to the cytoplasm. It carries out the reaction UDP-N-acetyl-alpha-D-muramoyl-L-alanyl-D-glutamate + meso-2,6-diaminopimelate + ATP = UDP-N-acetyl-alpha-D-muramoyl-L-alanyl-gamma-D-glutamyl-meso-2,6-diaminopimelate + ADP + phosphate + H(+). It functions in the pathway cell wall biogenesis; peptidoglycan biosynthesis. Catalyzes the addition of meso-diaminopimelic acid to the nucleotide precursor UDP-N-acetylmuramoyl-L-alanyl-D-glutamate (UMAG) in the biosynthesis of bacterial cell-wall peptidoglycan. In Vibrio cholerae serotype O1 (strain ATCC 39315 / El Tor Inaba N16961), this protein is UDP-N-acetylmuramoyl-L-alanyl-D-glutamate--2,6-diaminopimelate ligase.